Consider the following 453-residue polypeptide: Protein LOW PSII ACCUMULATION 1, chloroplastic (453 aa).

Residues 1-92 (MAVATAPSLN…LDLFKRGRVK (92 aa)) constitute a chloroplast transit peptide. TPR repeat units lie at residues 75 to 108 (AELC…APNP) and 112 to 145 (QAAY…YNLK). A run of 2 helical transmembrane segments spans residues 202–222 (FFYF…VPRL) and 238–258 (TTGN…LFLW).

As to quaternary structure, interacts with psbA, but not with psbD, petB, ALB3, LPA2 or LPA3. Is not a component of the PSII complex.

It localises to the plastid. It is found in the chloroplast thylakoid membrane. Its function is as follows. Chaperone required for efficient photosystem II (PSII) assembly. Binds to psbA during de novo biogenesis of PSII. In Arabidopsis thaliana (Mouse-ear cress), this protein is Protein LOW PSII ACCUMULATION 1, chloroplastic (LPA1).